A 201-amino-acid polypeptide reads, in one-letter code: 3-isopropylmalate dehydratase small subunit (201 aa).

This sequence belongs to the LeuD family. LeuD type 1 subfamily. Heterodimer of LeuC and LeuD.

It carries out the reaction (2R,3S)-3-isopropylmalate = (2S)-2-isopropylmalate. Its pathway is amino-acid biosynthesis; L-leucine biosynthesis; L-leucine from 3-methyl-2-oxobutanoate: step 2/4. Catalyzes the isomerization between 2-isopropylmalate and 3-isopropylmalate, via the formation of 2-isopropylmaleate. This chain is 3-isopropylmalate dehydratase small subunit, found in Nitrobacter hamburgensis (strain DSM 10229 / NCIMB 13809 / X14).